Reading from the N-terminus, the 126-residue chain is Small ribosomal subunit protein bS6 (126 aa).

Residues 104–126 (LARRDRGDRPERPREDFGAQAQA) form a disordered region. Basic and acidic residues predominate over residues 105 to 120 (ARRDRGDRPERPREDF).

Belongs to the bacterial ribosomal protein bS6 family.

In terms of biological role, binds together with bS18 to 16S ribosomal RNA. The chain is Small ribosomal subunit protein bS6 from Caulobacter vibrioides (strain ATCC 19089 / CIP 103742 / CB 15) (Caulobacter crescentus).